Here is a 102-residue protein sequence, read N- to C-terminus: ATP-dependent Clp protease adapter protein ClpS (102 aa).

Belongs to the ClpS family. Binds to the N-terminal domain of the chaperone ClpA.

Involved in the modulation of the specificity of the ClpAP-mediated ATP-dependent protein degradation. This is ATP-dependent Clp protease adapter protein ClpS from Nitrosospira multiformis (strain ATCC 25196 / NCIMB 11849 / C 71).